Consider the following 540-residue polypeptide: 2,3-bisphosphoglycerate-independent phosphoglycerate mutase (540 aa).

2 residues coordinate Mn(2+): Asp-25 and Ser-75. Residue Ser-75 is the Phosphoserine intermediate of the active site. Substrate is bound by residues His-136, 166 to 167 (RD), Arg-198, Arg-204, 269 to 272 (RPDR), and Lys-342. The Mn(2+) site is built by Asp-409, His-413, Asp-450, His-451, and His-468.

It belongs to the BPG-independent phosphoglycerate mutase family. Monomer. It depends on Mn(2+) as a cofactor.

The enzyme catalyses (2R)-2-phosphoglycerate = (2R)-3-phosphoglycerate. It functions in the pathway carbohydrate degradation; glycolysis; pyruvate from D-glyceraldehyde 3-phosphate: step 3/5. In terms of biological role, catalyzes the interconversion of 2-phosphoglycerate and 3-phosphoglycerate. The sequence is that of 2,3-bisphosphoglycerate-independent phosphoglycerate mutase from Prochlorococcus marinus subsp. pastoris (strain CCMP1986 / NIES-2087 / MED4).